The primary structure comprises 513 residues: ATP synthase subunit alpha (513 aa).

Position 169 to 176 (G169 to T176) interacts with ATP.

The protein belongs to the ATPase alpha/beta chains family. F-type ATPases have 2 components, CF(1) - the catalytic core - and CF(0) - the membrane proton channel. CF(1) has five subunits: alpha(3), beta(3), gamma(1), delta(1), epsilon(1). CF(0) has three main subunits: a(1), b(2) and c(9-12). The alpha and beta chains form an alternating ring which encloses part of the gamma chain. CF(1) is attached to CF(0) by a central stalk formed by the gamma and epsilon chains, while a peripheral stalk is formed by the delta and b chains.

The protein localises to the cell inner membrane. It catalyses the reaction ATP + H2O + 4 H(+)(in) = ADP + phosphate + 5 H(+)(out). Produces ATP from ADP in the presence of a proton gradient across the membrane. The alpha chain is a regulatory subunit. The polypeptide is ATP synthase subunit alpha (Idiomarina loihiensis (strain ATCC BAA-735 / DSM 15497 / L2-TR)).